We begin with the raw amino-acid sequence, 201 residues long: ATP-dependent Clp protease proteolytic subunit (201 aa).

Ser98 (nucleophile) is an active-site residue. His123 is a catalytic residue.

The protein belongs to the peptidase S14 family. In terms of assembly, fourteen ClpP subunits assemble into 2 heptameric rings which stack back to back to give a disk-like structure with a central cavity, resembling the structure of eukaryotic proteasomes.

It is found in the cytoplasm. The enzyme catalyses Hydrolysis of proteins to small peptides in the presence of ATP and magnesium. alpha-casein is the usual test substrate. In the absence of ATP, only oligopeptides shorter than five residues are hydrolyzed (such as succinyl-Leu-Tyr-|-NHMec, and Leu-Tyr-Leu-|-Tyr-Trp, in which cleavage of the -Tyr-|-Leu- and -Tyr-|-Trp bonds also occurs).. Functionally, cleaves peptides in various proteins in a process that requires ATP hydrolysis. Has a chymotrypsin-like activity. Plays a major role in the degradation of misfolded proteins. The chain is ATP-dependent Clp protease proteolytic subunit from Neorickettsia sennetsu (strain ATCC VR-367 / Miyayama) (Ehrlichia sennetsu).